A 696-amino-acid polypeptide reads, in one-letter code: Interleukin-1 receptor accessory protein-like 1 (696 aa).

Positions 1 to 18 are cleaved as a signal peptide; that stretch reads MKAPIPHLILLYATFTQS. Residues 19–134 enclose the Ig-like C2-type 1 domain; sequence LKVVTKRGSA…YCMKVSISLT (116 aa). The Extracellular segment spans residues 19 to 357; sequence LKVVTKRGSA…LLHKRELMYT (339 aa). Intrachain disulfides connect cysteine 31/cysteine 126 and cysteine 53/cysteine 118. 3 N-linked (GlcNAc...) asparagine glycosylation sites follow: asparagine 63, asparagine 122, and asparagine 138. Disulfide bonds link cysteine 143–cysteine 185 and cysteine 164–cysteine 216. Ig-like C2-type domains lie at 143 to 232 and 242 to 350; these read CYNS…TELT and PKLL…VLLH. Asparagine 213, asparagine 264, and asparagine 331 each carry an N-linked (GlcNAc...) asparagine glycan. Cysteine 267 and cysteine 334 are joined by a disulfide. The chain crosses the membrane as a helical span at residues 358 to 378; the sequence is VELAGGLGAILLLLVCLVTIY. Residues 379-696 are Cytoplasmic-facing; that stretch reads KCYKIEIMLF…RETSISSVIW (318 aa). One can recognise a TIR domain in the interval 403-559; that stretch reads KDYDAYLSYT…KFWKRLQYEM (157 aa). Glutamate 491 is an active-site residue. Residues 549 to 644 are interaction with NCS1; the sequence is SKFWKRLQYE…TGTLPLTSIG (96 aa). The interval 659–680 is disordered; the sequence is GQRPQTKSSREQNPDEAHTNSA. Positions 666–676 are enriched in basic and acidic residues; the sequence is SSREQNPDEAH.

This sequence belongs to the interleukin-1 receptor family. Homodimer. Interacts (calcium-independent) with NCS1. Interacts (via the first immunoglobilin domain) with PTPRD (via the second immunoglobilin domain); this interaction is PTPRD-splicing-dependent and induces pre- and post-synaptic differentiation of neurons and is required for IL1RAPL1-mediated synapse formation. As to expression, detected at low levels in heart, skeletal muscle, ovary, skin, amygdala, caudate nucleus, corpus callosum, hippocampus, substantia nigra and thalamus. Detected at very low levels in tonsil, prostate, testis, small intestine, placenta, colon and fetal liver.

It is found in the cell membrane. The protein localises to the cytoplasm. Its subcellular location is the cell projection. It localises to the axon. The protein resides in the dendrite. It catalyses the reaction NAD(+) + H2O = ADP-D-ribose + nicotinamide + H(+). May regulate secretion and presynaptic differentiation through inhibition of the activity of N-type voltage-gated calcium channel. May activate the MAP kinase JNK. Plays a role in neurite outgrowth. During dendritic spine formation can bidirectionally induce pre- and post-synaptic differentiation of neurons by trans-synaptically binding to PTPRD. The chain is Interleukin-1 receptor accessory protein-like 1 (IL1RAPL1) from Homo sapiens (Human).